The following is a 181-amino-acid chain: ATP synthase subunit delta (181 aa).

Belongs to the ATPase delta chain family. In terms of assembly, F-type ATPases have 2 components, F(1) - the catalytic core - and F(0) - the membrane proton channel. F(1) has five subunits: alpha(3), beta(3), gamma(1), delta(1), epsilon(1). F(0) has three main subunits: a(1), b(2) and c(10-14). The alpha and beta chains form an alternating ring which encloses part of the gamma chain. F(1) is attached to F(0) by a central stalk formed by the gamma and epsilon chains, while a peripheral stalk is formed by the delta and b chains.

It localises to the cell membrane. F(1)F(0) ATP synthase produces ATP from ADP in the presence of a proton or sodium gradient. F-type ATPases consist of two structural domains, F(1) containing the extramembraneous catalytic core and F(0) containing the membrane proton channel, linked together by a central stalk and a peripheral stalk. During catalysis, ATP synthesis in the catalytic domain of F(1) is coupled via a rotary mechanism of the central stalk subunits to proton translocation. Functionally, this protein is part of the stalk that links CF(0) to CF(1). It either transmits conformational changes from CF(0) to CF(1) or is implicated in proton conduction. This chain is ATP synthase subunit delta, found in Bacillus pumilus (strain SAFR-032).